A 341-amino-acid polypeptide reads, in one-letter code: MNIEDFDYHLPESLIAQTPLKNRDQSRLLVLSKDTGELTHLHFRDVIHYFEPGDTLVLNDTRVMPARLFGLKEETGAKVEMLMLTQIEGNDWEVLLKPAKRIKKGHRLNFGDGKIVAECIEELEQGGRIMRLHYEGILQERLDELGEMPLPPYIKERLDDPDRYQTVYAKESGSAAAPTAGLHFTDDLLNKIKQKGVHIAFITLHVGLGTFRPVSVENIDDHEMHSEYYQMTQETADLLNKTKESGKRVISVGTTSTRTLETIRRDHPQFVATSGWTDIFIYPGFEFKAIDGLITNFHLPKSTLVMLVSAFSNKKYILNAYHKAVEMEYRFFSFGDAMLII.

It belongs to the QueA family. Monomer.

The protein localises to the cytoplasm. The catalysed reaction is 7-aminomethyl-7-carbaguanosine(34) in tRNA + S-adenosyl-L-methionine = epoxyqueuosine(34) in tRNA + adenine + L-methionine + 2 H(+). It functions in the pathway tRNA modification; tRNA-queuosine biosynthesis. Functionally, transfers and isomerizes the ribose moiety from AdoMet to the 7-aminomethyl group of 7-deazaguanine (preQ1-tRNA) to give epoxyqueuosine (oQ-tRNA). The protein is S-adenosylmethionine:tRNA ribosyltransferase-isomerase of Staphylococcus epidermidis (strain ATCC 12228 / FDA PCI 1200).